We begin with the raw amino-acid sequence, 551 residues long: MALTLAAHKTLPRRKLVLVVLDGVGIGPRDEYDAVHVAKTPLMDALFNDPKHFRSICAHGTAVGLPTDADMGNSEVGHNALGAGRVVLQGASLVDDALESGEIFTSEGYRYLHGAFSQPGRTLHLIGLLSDGGVHSRDNQVYQILKHAGANGAKRIRVHALYDGRDVPDKTSFKFTDELEEVLAKLREGGCDARIASGGGRMFVTMDRYEADWSIVERGWRAQVLGEGRAFKSAREALTKFREEDANISDQYYPPFVIAGDDGRPIGTIEDGDAVLCFNFRGDRVIEMSRAFEEEEFDKFNRVRLPKVRYAGMMRYDGDLGIPNNFLVPPPKLTRTSEEYLIGSGCNIFALSETQKFGHVTYFWNGNRSGKLSEERETFCEIPSDRVQFNQKPLMKSKEITDAAVDAIKSGKYDMIRINYPNGDMVGHTGDLKATITSLEAVDQSLQRLKEAVDSVNGVFLITADHGNSDDMVQRDKKGKPVRDAEGNLMPLTSHTLAPVPVFIGGAGLDPRVQMRTDLPRAGLANVTATFINLMGFEAPSDYEPSLIEVA.

Residues aspartate 22 and serine 74 each contribute to the Mn(2+) site. The active-site Phosphoserine intermediate is serine 74. Substrate contacts are provided by residues histidine 135, 165 to 166, arginine 201, arginine 208, and 281 to 284; these read RD and RGDR. Position 319 (aspartate 319) interacts with Mn(2+). Lysine 356 serves as a coordination point for substrate. Mn(2+) is bound by residues aspartate 424, histidine 428, aspartate 465, histidine 466, and histidine 495.

Belongs to the BPG-independent phosphoglycerate mutase family. As to quaternary structure, monomer. Mn(2+) is required as a cofactor.

It is found in the cytoplasm. The catalysed reaction is (2R)-2-phosphoglycerate = (2R)-3-phosphoglycerate. The protein operates within carbohydrate degradation; glycolysis; pyruvate from D-glyceraldehyde 3-phosphate: step 3/5. Functionally, catalyzes the interconversion of 2-phosphoglycerate (2-PGA) and 3-phosphoglycerate (3-PGA). In Trypanosoma brucei brucei (strain 927/4 GUTat10.1), this protein is 2,3-bisphosphoglycerate-independent phosphoglycerate mutase.